The sequence spans 128 residues: Large ribosomal subunit protein bL12 (128 aa).

Belongs to the bacterial ribosomal protein bL12 family. As to quaternary structure, homodimer. Part of the ribosomal stalk of the 50S ribosomal subunit. Forms a multimeric L10(L12)X complex, where L10 forms an elongated spine to which 2 to 4 L12 dimers bind in a sequential fashion. Binds GTP-bound translation factors.

Its function is as follows. Forms part of the ribosomal stalk which helps the ribosome interact with GTP-bound translation factors. Is thus essential for accurate translation. This is Large ribosomal subunit protein bL12 from Synechococcus sp. (strain CC9311).